A 304-amino-acid chain; its full sequence is Putative HTH-type transcriptional regulatory protein Memar_2347 (304 aa).

In terms of domain architecture, HTH cro/C1-type spans 132-189; it reads LREVRERFRMSLGDLASHLGVSRRTISKYESGMGTTLDVAIKLEEIFNAPLVETIELL. Residues 143 to 162 constitute a DNA-binding region (H-T-H motif); sequence LGDLASHLGVSRRTISKYES.

The polypeptide is Putative HTH-type transcriptional regulatory protein Memar_2347 (Methanoculleus marisnigri (strain ATCC 35101 / DSM 1498 / JR1)).